Consider the following 270-residue polypeptide: Energy-coupling factor transporter ATP-binding protein EcfA (270 aa).

The ABC transporter domain maps to 5–238 (VEIENLTFFY…QLLEQNGLKA (234 aa)). 38–45 (GHNGAGKS) serves as a coordination point for ATP.

Belongs to the ABC transporter superfamily. Energy-coupling factor EcfA family. As to quaternary structure, forms a stable energy-coupling factor (ECF) transporter complex composed of 2 membrane-embedded substrate-binding proteins (S component), 2 ATP-binding proteins (A component) and 2 transmembrane proteins (T component).

It is found in the cell membrane. Its function is as follows. ATP-binding (A) component of a common energy-coupling factor (ECF) ABC-transporter complex. Unlike classic ABC transporters this ECF transporter provides the energy necessary to transport a number of different substrates. This chain is Energy-coupling factor transporter ATP-binding protein EcfA, found in Carboxydothermus hydrogenoformans (strain ATCC BAA-161 / DSM 6008 / Z-2901).